The following is a 140-amino-acid chain: L-fucose mutarotase (140 aa).

Histidine 22 acts as the Proton donor in catalysis. Substrate-binding positions include aspartate 30, arginine 107, and 129–131 (YGN).

Belongs to the RbsD / FucU family. FucU mutarotase subfamily. As to quaternary structure, homodecamer.

It localises to the cytoplasm. It catalyses the reaction alpha-L-fucose = beta-L-fucose. It participates in carbohydrate metabolism; L-fucose metabolism. Involved in the anomeric conversion of L-fucose. The polypeptide is L-fucose mutarotase (Salmonella gallinarum (strain 287/91 / NCTC 13346)).